We begin with the raw amino-acid sequence, 248 residues long: Proteasome subunit alpha type-3 (248 aa).

This sequence belongs to the peptidase T1A family. The 26S proteasome consists of a 20S proteasome core and two 19S regulatory subunits. The 20S proteasome core is composed of 28 subunits that are arranged in four stacked rings, resulting in a barrel-shaped structure. The two end rings are each formed by seven alpha subunits, and the two central rings are each formed by seven beta subunits. The catalytic chamber with the active sites is on the inside of the barrel.

The protein resides in the cytoplasm. The protein localises to the nucleus. The proteasome is a multicatalytic proteinase complex which is characterized by its ability to cleave peptides with Arg, Phe, Tyr, Leu, and Glu adjacent to the leaving group at neutral or slightly basic pH. The proteasome has an ATP-dependent proteolytic activity. In Dictyostelium discoideum (Social amoeba), this protein is Proteasome subunit alpha type-3 (psmA3).